We begin with the raw amino-acid sequence, 259 residues long: Type III pantothenate kinase (259 aa).

An ATP-binding site is contributed by Asp6–Val13. A substrate-binding site is contributed by Gly107–Arg110. The active-site Proton acceptor is Asp109. Asp129 lines the K(+) pocket. Thr132 is an ATP binding site. Thr184 is a substrate binding site.

The protein belongs to the type III pantothenate kinase family. Homodimer. It depends on NH4(+) as a cofactor. Requires K(+) as cofactor.

It localises to the cytoplasm. The catalysed reaction is (R)-pantothenate + ATP = (R)-4'-phosphopantothenate + ADP + H(+). It functions in the pathway cofactor biosynthesis; coenzyme A biosynthesis; CoA from (R)-pantothenate: step 1/5. Catalyzes the phosphorylation of pantothenate (Pan), the first step in CoA biosynthesis. This is Type III pantothenate kinase from Ruegeria pomeroyi (strain ATCC 700808 / DSM 15171 / DSS-3) (Silicibacter pomeroyi).